The primary structure comprises 347 residues: NADH-ubiquinone oxidoreductase chain 2 (347 aa).

9 consecutive transmembrane segments (helical) span residues 3–23 (PLAL…TMMS), 59–79 (YFMT…INLM), 93–115 (VASN…HFWV), 150–170 (NTNL…WGGL), 178–198 (ILAY…PFNP), 200–220 (LTLL…MILA), 240–260 (MTIM…LSGF), 274–294 (NSII…YFYT), and 326–346 (LPTL…ISML).

This sequence belongs to the complex I subunit 2 family. Core subunit of respiratory chain NADH dehydrogenase (Complex I) which is composed of 45 different subunits. Interacts with TMEM242.

Its subcellular location is the mitochondrion inner membrane. It carries out the reaction a ubiquinone + NADH + 5 H(+)(in) = a ubiquinol + NAD(+) + 4 H(+)(out). Its function is as follows. Core subunit of the mitochondrial membrane respiratory chain NADH dehydrogenase (Complex I) which catalyzes electron transfer from NADH through the respiratory chain, using ubiquinone as an electron acceptor. Essential for the catalytic activity and assembly of complex I. The protein is NADH-ubiquinone oxidoreductase chain 2 of Elephas maximus (Indian elephant).